Here is a 776-residue protein sequence, read N- to C-terminus: Bifunctional lysine-specific demethylase and histidyl-hydroxylase NO66 (776 aa).

3 disordered regions span residues 1–57, 87–126, and 165–288; these read MGKK…EPKF, EQNG…AHKH, and ILDE…DDEG. 2 stretches are compositionally biased toward basic and acidic residues: residues 47–57 and 98–119; these read HYKEPSKEPKF and EISP…DGVA. Residues 166-204 are compositionally biased toward acidic residues; it reads LDEEVEDEEIDEEEFEDEEEVEDEEGMDEDETEIDESEM. Residues 206–216 are compositionally biased toward basic and acidic residues; that stretch reads VDPKDIERCIE. A compositionally biased stretch (acidic residues) spans 217-288; sequence FEDVDDEDEM…EMDADSDDEG (72 aa). The region spanning 425–569 is the JmjC domain; it reads QLVNPQTFDD…NLMEKVIPEA (145 aa). Fe cation-binding residues include histidine 468, aspartate 470, and histidine 535.

Belongs to the ROX family. NO66 subfamily. Fe(2+) is required as a cofactor.

It is found in the nucleus. It catalyses the reaction N(6),N(6)-dimethyl-L-lysyl(36)-[histone H3] + 2 2-oxoglutarate + 2 O2 = L-lysyl(36)-[histone H3] + 2 formaldehyde + 2 succinate + 2 CO2. In terms of biological role, oxygenase that can act as both a histone lysine demethylase and a ribosomal histidine hydroxylase. Specifically demethylates 'Lys-4' (H3K4me) and 'Lys-36' (H3K36me) of histone H3, thereby playing a central role in histone code. The sequence is that of Bifunctional lysine-specific demethylase and histidyl-hydroxylase NO66 (jmjc-1) from Caenorhabditis briggsae.